A 524-amino-acid polypeptide reads, in one-letter code: Portal protein (524 aa).

The stretch at 486–516 (AMKDILQMTDEEIEQEAKQIEEESKEARFQD) forms a coiled coil. The span at 500–516 (QEAKQIEEESKEARFQD) shows a compositional bias: basic and acidic residues. Positions 500 to 524 (QEAKQIEEESKEARFQDPDQEQEDF) are disordered.

The protein belongs to the Tevenvirinae portal protein family. As to quaternary structure, homododecamer. Interacts with the large terminase subunit. Interacts with the major capsid protein. Interacts with the capsid vertex protein.

The protein resides in the virion. It localises to the host cell inner membrane. Functionally, forms the portal vertex of the capsid. This portal plays critical roles in head assembly, genome packaging, neck/tail attachment, and genome ejection. The portal protein multimerizes as a single ring-shaped homododecamer arranged around a central channel. Binds to the terminase subunits to form the packaging machine. Attaches to the host inner membrane most likely through interaction with host yidC and forms together with chaperone gp40 an initiator complex to form the prohead. This is Portal protein (20) from Enterobacteria phage T4 (Bacteriophage T4).